Consider the following 598-residue polypeptide: DNA mismatch repair protein MutL (598 aa).

Belongs to the DNA mismatch repair MutL/HexB family.

Functionally, this protein is involved in the repair of mismatches in DNA. It is required for dam-dependent methyl-directed DNA mismatch repair. May act as a 'molecular matchmaker', a protein that promotes the formation of a stable complex between two or more DNA-binding proteins in an ATP-dependent manner without itself being part of a final effector complex. The sequence is that of DNA mismatch repair protein MutL from Thiobacillus denitrificans (strain ATCC 25259 / T1).